Reading from the N-terminus, the 253-residue chain is Chitooligosaccharide deacetylase (253 aa).

Histidine 61 and histidine 125 together coordinate Mg(2+).

It belongs to the YdjC deacetylase family. ChbG subfamily. As to quaternary structure, homodimer. Mg(2+) is required as a cofactor.

It localises to the cytoplasm. The enzyme catalyses N,N'-diacetylchitobiose + H2O = N-acetyl-beta-D-glucosaminyl-(1-&gt;4)-D-glucosamine + acetate. It carries out the reaction diacetylchitobiose-6'-phosphate + H2O = N'-monoacetylchitobiose-6'-phosphate + acetate. Its pathway is glycan degradation; chitin degradation. Its function is as follows. Involved in the degradation of chitin. ChbG is essential for growth on the acetylated chitooligosaccharides chitobiose and chitotriose but is dispensable for growth on cellobiose and chitosan dimer, the deacetylated form of chitobiose. Deacetylation of chitobiose-6-P and chitotriose-6-P is necessary for both the activation of the chb promoter by the regulatory protein ChbR and the hydrolysis of phosphorylated beta-glucosides by the phospho-beta-glucosidase ChbF. Catalyzes the removal of only one acetyl group from chitobiose-6-P to yield monoacetylchitobiose-6-P, the inducer of ChbR and the substrate of ChbF. The sequence is that of Chitooligosaccharide deacetylase from Proteus mirabilis (strain HI4320).